We begin with the raw amino-acid sequence, 307 residues long: MDVVNQLVAGGQFRVVKEPLGFVKVLQWVFAIFAFATCGSYTGELRLSVECANKTESALNIEVEFEYPFRLHQVYFDAPSCVKGGTTKIFLVGDYSSSAEFFVTVAVFAFLYSMGALATYIFLQNKYRENNKGPMMDFLATAVFAFMWLVSSSAWAKGLSDVKMATDPENIIKEMPMCRQTGNTCKELRDPVTSGLNTSVVFGFLNLVLWVGNLWFVFKETGWAAPFMRAPPGAPEKQPAPGDAYGDAGYGQGPGGYGPQDSYGPQGGYQPDYGQPASGGGGYGPQGDYGQQGYGQQGAPTSFSNQM.

The Cytoplasmic portion of the chain corresponds to 1–19; sequence MDVVNQLVAGGQFRVVKEP. The MARVEL domain occupies 15–222; sequence VVKEPLGFVK…NLWFVFKETG (208 aa). Residues 20–43 form a helical membrane-spanning segment; the sequence is LGFVKVLQWVFAIFAFATCGSYTG. Residues 44 to 101 are Vesicular-facing; the sequence is ELRLSVECANKTESALNIEVEFEYPFRLHQVYFDAPSCVKGGTTKIFLVGDYSSSAEF. Asn-53 carries an N-linked (GlcNAc...) asparagine glycan. A Phosphotyrosine modification is found at Tyr-75. The helical transmembrane segment at 102–125 threads the bilayer; that stretch reads FVTVAVFAFLYSMGALATYIFLQN. The Cytoplasmic segment spans residues 126–132; the sequence is KYRENNK. The chain crosses the membrane as a helical span at residues 133–156; it reads GPMMDFLATAVFAFMWLVSSSAWA. Residues 157-194 lie on the Vesicular side of the membrane; it reads KGLSDVKMATDPENIIKEMPMCRQTGNTCKELRDPVTS. The chain crosses the membrane as a helical span at residues 195–218; that stretch reads GLNTSVVFGFLNLVLWVGNLWFVF. Residues 219-307 are Cytoplasmic-facing; the sequence is KETGWAAPFM…GAPTSFSNQM (89 aa). Thr-221 bears the Phosphothreonine mark. A disordered region spans residues 233 to 307; sequence GAPEKQPAPG…GAPTSFSNQM (75 aa). Over residues 248 to 258 the composition is skewed to gly residues; sequence AGYGQGPGGYG. The repeats, Gly-rich stretch occupies residues 249–298; it reads GYGQGPGGYGPQDSYGPQGGYQPDYGQPASGGGGYGPQGDYGQQGYGQQG. Low complexity predominate over residues 259-276; the sequence is PQDSYGPQGGYQPDYGQP. Phosphotyrosine occurs at positions 273 and 289. Residues 277–296 are compositionally biased toward gly residues; the sequence is ASGGGGYGPQGDYGQQGYGQ.

Belongs to the synaptophysin/synaptobrevin family. Homohexamer or homotetramer. Interacts with SRCIN1. Interacts with VAMP2; the interaction is inhibited by interaction of VAPM2 with SEPT8. In terms of processing, ubiquitinated; mediated by SIAH1 or SIAH2 and leading to its subsequent proteasomal degradation. Post-translationally, phosphorylated by SRC. Expressed in the brain with expression in the cerebrum and the cerebellum.

The protein resides in the cytoplasmic vesicle. It localises to the secretory vesicle. The protein localises to the synaptic vesicle membrane. It is found in the synapse. Its subcellular location is the synaptosome. Functionally, possibly involved in structural functions as organizing other membrane components or in targeting the vesicles to the plasma membrane. Involved in the regulation of short-term and long-term synaptic plasticity. This is Synaptophysin (Syp) from Rattus norvegicus (Rat).